The primary structure comprises 1912 residues: Chromodomain-helicase-DNA-binding protein 4 (1912 aa).

The tract at residues 1 to 157 is disordered; the sequence is MASGLGSPSP…PKSSAQLLED (157 aa). The segment covering 35 to 45 has biased composition (acidic residues); sequence NEEDPEEDLSE. At Ser-44 the chain carries Phosphoserine. Basic residues predominate over residues 113-131; the sequence is GKKKKKKLGPKKEKKSKSK. Lys-133 is covalently cross-linked (Glycyl lysine isopeptide (Lys-Gly) (interchain with G-Cter in SUMO2)). The segment covering 135-145 has biased composition (acidic residues); it reads EEEEEDDDDDS. Glycyl lysine isopeptide (Lys-Gly) (interchain with G-Cter in SUMO2) cross-links involve residues Lys-146, Lys-179, and Lys-297. The segment at 243–360 is disordered; the sequence is ATEVAPPPPP…KKKKGEEEVT (118 aa). The KIKL signature appears at 295 to 298; the sequence is KIKL. Ser-303 is modified (phosphoserine). A Glycyl lysine isopeptide (Lys-Gly) (interchain with G-Cter in SUMO2) cross-link involves residue Lys-304. Residues Ser-308, Ser-309, Ser-310, and Ser-319 each carry the phosphoserine modification. Residues 311–323 are compositionally biased toward acidic residues; the sequence is EDDDLDVESDFDD. Residues 340 to 353 show a composition bias toward basic residues; sequence SRSRKKLRTTKKKK. Thr-367 carries the post-translational modification Phosphothreonine. The PHD-type 1 zinc-finger motif lies at 370–417; sequence QDYCEVCQQGGEIILCDTCPRAYHMVCLDPDMEKAPEGKWSCPHCEKE. Ser-428 is modified (phosphoserine). The PHD-type 2 zinc finger occupies 449 to 496; it reads MEFCRVCKDGGELLCCDTCPSSYHIHCLNPPLPEIPNGEWLCPRCTCP. One can recognise a Chromo 1 domain in the interval 494-594; it reads TCPALKGKVQ…SGDFGGDEEK (101 aa). Disordered regions lie at residues 510–537 and 578–603; these read WGQP…PLEG and NDMD…NKDP. The segment covering 513 to 522 has biased composition (pro residues); that stretch reads PPSPTPVPRP. Position 515 is a phosphoserine (Ser-515). Residues Thr-517 and Thr-529 each carry the phosphothreonine modification. Phosphoserine is present on Ser-531. Residues Lys-618 and Lys-696 each participate in a glycyl lysine isopeptide (Lys-Gly) (interchain with G-Cter in SUMO2) cross-link. The 76-residue stretch at 622 to 697 folds into the Chromo 2 domain; it reads MMIHRILNHS…KLKKVKLRKL (76 aa). Thr-703 carries the phosphothreonine modification. Lys-711 participates in a covalent cross-link: Glycyl lysine isopeptide (Lys-Gly) (interchain with G-Cter in SUMO1); alternate. Lys-711 participates in a covalent cross-link: Glycyl lysine isopeptide (Lys-Gly) (interchain with G-Cter in SUMO2); alternate. In terms of domain architecture, Helicase ATP-binding spans 738–922; sequence RFSWAQGTDT…FHLLNFLTPE (185 aa). 751 to 758 contacts ATP; sequence DEMGLGKT. Residues 873 to 876 carry the DEAH box motif; it reads DEAH. Residues 1054 to 1203 form the Helicase C-terminal domain; the sequence is LLQKMLKNLK…LTHLVVRPGL (150 aa). Ser-1209 is modified (phosphoserine). Glycyl lysine isopeptide (Lys-Gly) (interchain with G-Cter in SUMO2) cross-links involve residues Lys-1212, Lys-1228, Lys-1239, and Lys-1304. 3 positions are modified to phosphoserine: Ser-1308, Ser-1349, and Ser-1370. Disordered stretches follow at residues 1344–1401 and 1525–1562; these read NYND…KPLP and EENK…PAED. Residues Lys-1528 and Lys-1529 each participate in a glycyl lysine isopeptide (Lys-Gly) (interchain with G-Cter in SUMO2) cross-link. 3 positions are modified to phosphoserine: Ser-1531, Ser-1535, and Ser-1537. Over residues 1535-1544 the composition is skewed to pro residues; that stretch reads SPSPKTPTPS. Phosphothreonine is present on residues Thr-1542, Thr-1549, and Thr-1553. A Glycyl lysine isopeptide (Lys-Gly) (interchain with G-Cter in SUMO2) cross-link involves residue Lys-1565. Ser-1570 is subject to Phosphoserine. Positions 1570–1584 are enriched in basic and acidic residues; it reads SLKEEESIEGEKEVK. Disordered stretches follow at residues 1570-1589 and 1594-1644; these read SLKE…TAPE and CTQA…VEKV. Residue Lys-1572 forms a Glycyl lysine isopeptide (Lys-Gly) (interchain with G-Cter in SUMO2) linkage. Position 1576 is a phosphoserine (Ser-1576). The interval 1577-1912 is required for interaction with PCNT; sequence IEGEKEVKST…PTPQQVAQQQ (336 aa). A Glycyl lysine isopeptide (Lys-Gly) (interchain with G-Cter in SUMO2) cross-link involves residue Lys-1584. Ser-1602 carries the phosphoserine modification. The span at 1603-1644 shows a compositional bias: basic and acidic residues; it reads EDEKVVVEPPEGEEKVEKAEVKERTEEPMETEPKGAADVEKV. Residues Lys-1606, Lys-1617, and Lys-1636 each participate in a glycyl lysine isopeptide (Lys-Gly) (interchain with G-Cter in SUMO2) cross-link. A Glycyl lysine isopeptide (Lys-Gly) (interchain with G-Cter in SUMO2); alternate cross-link involves residue Lys-1643. Lys-1643 is modified (N6-acetyllysine; alternate). Lys-1647 is covalently cross-linked (Glycyl lysine isopeptide (Lys-Gly) (interchain with G-Cter in SUMO2)). Position 1653 is a phosphothreonine (Thr-1653). Glycyl lysine isopeptide (Lys-Gly) (interchain with G-Cter in SUMO2) cross-links involve residues Lys-1660 and Lys-1670. Phosphothreonine is present on Thr-1679. Glycyl lysine isopeptide (Lys-Gly) (interchain with G-Cter in SUMO2) cross-links involve residues Lys-1687 and Lys-1865.

It belongs to the SNF2/RAD54 helicase family. In terms of assembly, component of the nucleosome remodeling and deacetylase (NuRD) repressor complex, composed of core proteins MTA1, MTA2, MTA3, RBBP4, RBBP7, HDAC1, HDAC2, MBD2, MBD3, and peripherally associated proteins CDK2AP1, CDK2AP2, GATAD2A, GATAD2B, CHD3, CHD4 and CHD5. The exact stoichiometry of the NuRD complex is unknown, and some subunits such as MBD2 and MBD3, GATAD2A and GATAD2B, and CHD3, CHD4 and CHD5 define mutually exclusive NuRD complexes. Interacts with IKFZ1; the interaction is direct and when in part of the NuRD complex. Part of a complex containing ATR and HDAC2. Interacts with HDAC2; the interaction is direct. Interacts with the cohesin complex component RAD21; the interaction is direct. Interacts with the ISWI chromatin remodeling complex component SMARCA5; the interaction is direct. Interacts with ZGPAT; the interaction is direct. Interacts with ZMYND8; the interaction is direct, appears to occur with monomeric ZMYND8, and is increased following DNA damage. Interacts with BCL6. Interacts with BRD4. Interacts with CBX1. Interacts with CBX3. Interacts with CBX5. Interacts with GATAD2A. Interacts with HDAC1. Interacts with KLF1; the interaction depends on sumoylation of KLF1, and leads to its transcriptional repression. Interacts with MTA1. Interacts with PCNT. Interacts with RBBP7. Interacts with SETX. Interacts with TRIM27. Interacts with histone H3. Interacts with histone H4. Does not interact with PWWP2A. Does not interact with PWWP2B. Interacts (via KIKL motif) with BRD3 (via NET domain). Zn(2+) serves as cofactor. Widely expressed.

The protein localises to the nucleus. Its subcellular location is the cytoplasm. The protein resides in the cytoskeleton. It is found in the microtubule organizing center. It localises to the centrosome. It carries out the reaction ATP + H2O = ADP + phosphate + H(+). Functionally, ATP-dependent chromatin-remodeling factor that binds and distorts nucleosomal DNA. Acts as a component of the histone deacetylase NuRD complex which participates in the remodeling of chromatin. Localizes to acetylated damaged chromatin in a ZMYND8-dependent manner, to promote transcriptional repression and double-strand break repair by homologous recombination. Involved in neurogenesis. This Homo sapiens (Human) protein is Chromodomain-helicase-DNA-binding protein 4 (CHD4).